Here is a 331-residue protein sequence, read N- to C-terminus: NADH-cytochrome b5 reductase 2 (331 aa).

The chain crosses the membrane as a helical span at residues 36–56 (VGILIASAVGMAGFGTYFMFG). The region spanning 80–185 (KGFVSLQLDD…KGPLPKYEWS (106 aa)) is the FAD-binding FR-type domain. 188 to 223 (KHPHVAMIAGGTGITPMYQIMRAIFKNPADKTKVTL) is an FAD binding site.

The protein belongs to the flavoprotein pyridine nucleotide cytochrome reductase family. Requires FAD as cofactor.

It is found in the mitochondrion outer membrane. The enzyme catalyses 2 Fe(III)-[cytochrome b5] + NADH = 2 Fe(II)-[cytochrome b5] + NAD(+) + H(+). Functionally, may mediate the reduction of outer membrane cytochrome b5. The sequence is that of NADH-cytochrome b5 reductase 2 (MCR1) from Pyricularia oryzae (strain 70-15 / ATCC MYA-4617 / FGSC 8958) (Rice blast fungus).